The primary structure comprises 521 residues: GMP synthase [glutamine-hydrolyzing] (521 aa).

In terms of domain architecture, Glutamine amidotransferase type-1 spans 5 to 197 (KILILDFGSQ…VLDICGAQPS (193 aa)). The Nucleophile role is filled by C81. Catalysis depends on residues H171 and E173. Residues 198 to 390 (WTMPNYIEEA…LGLPREMVYR (193 aa)) form the GMPS ATP-PPase domain. 225–231 (SGGVDSS) contacts ATP.

In terms of assembly, homodimer.

The catalysed reaction is XMP + L-glutamine + ATP + H2O = GMP + L-glutamate + AMP + diphosphate + 2 H(+). The protein operates within purine metabolism; GMP biosynthesis; GMP from XMP (L-Gln route): step 1/1. In terms of biological role, catalyzes the synthesis of GMP from XMP. This Neisseria meningitidis serogroup C / serotype 2a (strain ATCC 700532 / DSM 15464 / FAM18) protein is GMP synthase [glutamine-hydrolyzing].